The following is a 155-amino-acid chain: Ribosomal RNA large subunit methyltransferase H (155 aa).

S-adenosyl-L-methionine is bound by residues L72, G103, and 122 to 127 (LSALTL).

The protein belongs to the RNA methyltransferase RlmH family. As to quaternary structure, homodimer.

Its subcellular location is the cytoplasm. It carries out the reaction pseudouridine(1915) in 23S rRNA + S-adenosyl-L-methionine = N(3)-methylpseudouridine(1915) in 23S rRNA + S-adenosyl-L-homocysteine + H(+). Specifically methylates the pseudouridine at position 1915 (m3Psi1915) in 23S rRNA. The chain is Ribosomal RNA large subunit methyltransferase H from Escherichia fergusonii (strain ATCC 35469 / DSM 13698 / CCUG 18766 / IAM 14443 / JCM 21226 / LMG 7866 / NBRC 102419 / NCTC 12128 / CDC 0568-73).